Consider the following 858-residue polypeptide: DNA mismatch repair protein MutS (858 aa).

Position 609–616 (609–616) interacts with ATP; the sequence is GPNMSGKS.

Belongs to the DNA mismatch repair MutS family.

In terms of biological role, this protein is involved in the repair of mismatches in DNA. It is possible that it carries out the mismatch recognition step. This protein has a weak ATPase activity. The chain is DNA mismatch repair protein MutS from Enterococcus faecalis (strain ATCC 700802 / V583).